Consider the following 716-residue polypeptide: Protein C-mannosyl-transferase DPY19L3 (716 aa).

Topologically, residues 1–43 (MMSIRQRREIRATEVSEDFPAQEENVKLENKLPSGCTSRRLWK) are cytoplasmic. The chain crosses the membrane as a helical span at residues 44–64 (ILSLTIGGTIALCIGLLTSVY). At 65–154 (LATLHENDLW…RVLPIQKYLE (90 aa)) the chain is on the lumenal side. The N-linked (GlcNAc...) asparagine glycan is linked to asparagine 118. The helical transmembrane segment at 155-182 (PVYFYIYTLFGLQAIYVTALYITSWLLS) threads the bilayer. Topologically, residues 183–184 (GT) are cytoplasmic. The name=3 intramembrane region spans 185 to 197 (WLSGLLAAFWYVT). The Cytoplasmic segment spans residues 198–215 (NRIDTTRVEFTIPLRENW). Positions 216 to 230 (ALPFFAIQIAAITYF) form an intramembrane region, name=4. The Cytoplasmic segment spans residues 231–239 (LRPNLQPLS). The helical transmembrane segment at 240 to 256 (ERLTLLAIFISTFLFSL) threads the bilayer. Topologically, residues 257–262 (TWQFNQ) are lumenal. A helical membrane pass occupies residues 263-279 (FMMLMQALVLFTLDSLD). The Cytoplasmic portion of the chain corresponds to 280–289 (MLPAVKATWL). A helical transmembrane segment spans residues 290-306 (YGIQITSLLLVCILQFF). The Lumenal segment spans residues 307-308 (NS). A helical transmembrane segment spans residues 309–323 (MILGSLLISFNLSVF). The Cytoplasmic segment spans residues 324-338 (IARKLQKNLKTGSFL). A helical transmembrane segment spans residues 339–359 (NRLGKLLLHLFMVLCLTLFLN). Topologically, residues 360–414 (NIIKKILNLKSDEHIFKFLKAKFGLGATRDFDANLYLCEEAFGLLPFNTFGRLSD) are lumenal. Residues 415–437 (TLLFYAYIFVLSITVIVAFVVAF) form a helical membrane-spanning segment. The Cytoplasmic segment spans residues 438–465 (HNLSDSTNQQSVGKMEKGTVDLKPETAY). A helical transmembrane segment spans residues 466–485 (NLIHTILFGFLALSTMRMKY). Topologically, residues 486–487 (LW) are lumenal. The chain crosses the membrane as a helical span at residues 488–499 (TSHMCVFASFGL). The Cytoplasmic portion of the chain corresponds to 500–522 (CSPEIWELLLKSVHLYNPKRICI). Residues 523-539 (MRYSVPILILLYLCYKF) form a helical membrane-spanning segment. Topologically, residues 540 to 716 (WPGMMDELSE…FHVYKLSRNK (177 aa)) are lumenal. N-linked (GlcNAc...) asparagine glycosylation is present at asparagine 704.

It belongs to the dpy-19 family. Widely expressed.

It is found in the endoplasmic reticulum membrane. It catalyses the reaction L-tryptophyl-[protein] + a di-trans,poly-cis-dolichyl beta-D-mannosyl phosphate = C-alpha-D-mannosyl-L-tryptophyl-[protein] + a di-trans,poly-cis-dolichyl phosphate + H(+). The protein operates within protein modification; protein glycosylation. Its function is as follows. C-mannosyltransferase that mediates C-mannosylation of tryptophan residues on target proteins. The reaction occurs on the luminal side of the endoplasmic reticulum and involves the transfer of a mannose unit from a dolichylphosphate mannose (Dol-P-Man) donor to an acceptor protein containing a WxxW or WxxC consensus sequence. C-mannosylates RSPO1, a Wnt signaling regulator, preferentially at the first Trp residue in the sequence WxxW. C-mannosylates the netrin receptor UNC5A, preferentially at the third tryptophan of WxxWxxWxxC sequence. In terms of biological role, has no C-mannosyltransferase activity. The polypeptide is Protein C-mannosyl-transferase DPY19L3 (DPY19L3) (Homo sapiens (Human)).